A 545-amino-acid polypeptide reads, in one-letter code: Glucose-6-phosphate isomerase (545 aa).

The active-site Proton donor is Glu351. Catalysis depends on residues His382 and Lys510.

The protein belongs to the GPI family.

It localises to the cytoplasm. The enzyme catalyses alpha-D-glucose 6-phosphate = beta-D-fructose 6-phosphate. It participates in carbohydrate biosynthesis; gluconeogenesis. The protein operates within carbohydrate degradation; glycolysis; D-glyceraldehyde 3-phosphate and glycerone phosphate from D-glucose: step 2/4. Catalyzes the reversible isomerization of glucose-6-phosphate to fructose-6-phosphate. This Shewanella loihica (strain ATCC BAA-1088 / PV-4) protein is Glucose-6-phosphate isomerase.